A 394-amino-acid polypeptide reads, in one-letter code: MAKAKFERVKPHVNVGTIGHVDHGKTTLTAAITNVLAKVYGGVAKDFASIDNAPEERERGITISTSHVEYDTPTRHYAHVDCPGHADYVKNMITGAAQMDGAILVVAATDGPMPQTREHILLSRQVGVPYIIVFMNKCDMVDDEELLELVEMEVRELLSEYDFPGDDLPLIQGSALKALEGEKEWEDKIVELANALDSYIPEPERDIDKAFIMPIEDVFSIQGRGTVVTGRVEAGIIRINDEIEIVGIRDTTKSICTGVEMFRKLLDEGRAGENIGALLRGTKREDVERGQVLAKPGSIKPHTTFESEVYVLSKDEGGRHTPFFKGYRPQFYFRTTDVTGDVQLPEGVEMVMPGDNVKMTVTLIAPIAMDEGLRFAIREGGRTVGAGVVANIVA.

One can recognise a tr-type G domain in the interval 10 to 204; that stretch reads KPHVNVGTIG…ALDSYIPEPE (195 aa). Positions 19 to 26 are G1; that stretch reads GHVDHGKT. Residue 19-26 participates in GTP binding; the sequence is GHVDHGKT. T26 provides a ligand contact to Mg(2+). Positions 60 to 64 are G2; that stretch reads GITIS. The segment at 81 to 84 is G3; sequence DCPG. Residues 81 to 85 and 136 to 139 each bind GTP; these read DCPGH and NKCD. The tract at residues 136-139 is G4; the sequence is NKCD. A G5 region spans residues 174-176; that stretch reads SAL.

The protein belongs to the TRAFAC class translation factor GTPase superfamily. Classic translation factor GTPase family. EF-Tu/EF-1A subfamily. As to quaternary structure, monomer.

Its subcellular location is the cytoplasm. The catalysed reaction is GTP + H2O = GDP + phosphate + H(+). Functionally, GTP hydrolase that promotes the GTP-dependent binding of aminoacyl-tRNA to the A-site of ribosomes during protein biosynthesis. The chain is Elongation factor Tu 2 from Pseudoalteromonas translucida (strain TAC 125).